The primary structure comprises 482 residues: 23S rRNA (uracil(1939)-C(5))-methyltransferase RlmD (482 aa).

A disordered region spans residues 1–33; it reads MANLFKQSRAKQKNKTTPSQTQTSTKGSARANA. Low complexity predominate over residues 15-28; sequence KTTPSQTQTSTKGS. The region spanning 51-108 is the TRAM domain; that stretch reads TAQDANNNAITIQELDWMGQGVARGATMYFVEGALPGETCDIEVVSSKKKVVSAKTIS. [4Fe-4S] cluster is bound by residues Cys-121, Cys-127, Cys-130, and Cys-208. Positions 313, 342, 347, 363, 390, and 411 each coordinate S-adenosyl-L-methionine. Cys-437 acts as the Nucleophile in catalysis.

It belongs to the class I-like SAM-binding methyltransferase superfamily. RNA M5U methyltransferase family. RlmD subfamily.

The catalysed reaction is uridine(1939) in 23S rRNA + S-adenosyl-L-methionine = 5-methyluridine(1939) in 23S rRNA + S-adenosyl-L-homocysteine + H(+). In terms of biological role, catalyzes the formation of 5-methyl-uridine at position 1939 (m5U1939) in 23S rRNA. The protein is 23S rRNA (uracil(1939)-C(5))-methyltransferase RlmD of Alteromonas mediterranea (strain DSM 17117 / CIP 110805 / LMG 28347 / Deep ecotype).